A 502-amino-acid chain; its full sequence is Cysteine--tRNA ligase (502 aa).

C30 is a binding site for Zn(2+). The short motif at 32-42 (PTIYDYAHIGN) is the 'HIGH' region element. Zn(2+)-binding residues include C224, H263, and E267. Residues 296-300 (KMSKS) carry the 'KMSKS' region motif. K299 provides a ligand contact to ATP.

It belongs to the class-I aminoacyl-tRNA synthetase family. In terms of assembly, monomer. It depends on Zn(2+) as a cofactor.

The protein resides in the cytoplasm. It catalyses the reaction tRNA(Cys) + L-cysteine + ATP = L-cysteinyl-tRNA(Cys) + AMP + diphosphate. This is Cysteine--tRNA ligase from Bartonella quintana (strain Toulouse) (Rochalimaea quintana).